Reading from the N-terminus, the 702-residue chain is Autophagy-related protein 9 (702 aa).

Topologically, residues 1 to 205 (MFYQPAQNKK…GKGLSCIIVH (205 aa)) are cytoplasmic. The interval 35 to 128 (QESLDSDEDE…SKQKPALPNF (94 aa)) is disordered. Acidic residues predominate over residues 38–47 (LDSDEDESSP). Residues 94–107 (SSKVPSKHPSPSFP) are compositionally biased toward low complexity. Polar residues predominate over residues 108-120 (ETTSLRNLQNGSK). The helical transmembrane segment at 206–223 (RLFQILTVSFVIGFTTFI) threads the bilayer. The Lumenal portion of the chain corresponds to 224 to 251 (TSCIDWPAVTPHGSLAGVTKSQCIAQMS). Residues 252-270 (PITYLVLWLFLSFLLALWI) form a helical membrane-spanning segment. The Cytoplasmic portion of the chain corresponds to 271–421 (YYLTDIPRLW…RRRFIVAGFL (151 aa)). Residues 422–446 (NCLFAPIVAIYLVIHNFFRYFNEYH) lie within the membrane without spanning it. The Cytoplasmic portion of the chain corresponds to 447–496 (KNPGALSTRRYTPLALWTFREYNELQHFFDERINDSYAAASHYVSQFPDF). A helical membrane pass occupies residues 497–522 (NMIRLFKYISFILGSFTAILVIITVF). Residues 523–537 (DPELMVTFEITKDRS) lie on the Lumenal side of the membrane. Residues 538–555 (VLFYLGLFGSLIAVSRSI) traverse the membrane as a helical segment. The Cytoplasmic portion of the chain corresponds to 556-603 (IPDETLVFAPEKALRRVITFTHYMPGWWSDNMHSKAVQQEFCSLYSYR). An intramembrane segment occupies 604-624 (IVNLLWEILGILLTPVLLFFT). The Cytoplasmic portion of the chain corresponds to 625-702 (FPSCSQDIVD…NTEAPRRDLR (78 aa)).

Belongs to the ATG9 family. Homotrimer; forms a homotrimer with a central pore that forms a path between the two membrane leaflets. Interacts with ctl1. Post-translationally, phosphorylated by atg1. Atg1 phosphorylation is required for preautophagosome elongation.

The protein localises to the preautophagosomal structure membrane. The protein resides in the cytoplasmic vesicle membrane. It localises to the golgi apparatus membrane. Its subcellular location is the endoplasmic reticulum membrane. It carries out the reaction a 1,2-diacyl-sn-glycero-3-phosphocholine(in) = a 1,2-diacyl-sn-glycero-3-phosphocholine(out). It catalyses the reaction a 1,2-diacyl-sn-glycero-3-phospho-L-serine(in) = a 1,2-diacyl-sn-glycero-3-phospho-L-serine(out). The enzyme catalyses a 1,2-diacyl-sn-glycero-3-phosphoethanolamine(in) = a 1,2-diacyl-sn-glycero-3-phosphoethanolamine(out). The catalysed reaction is a 1,2-diacyl-sn-glycero-3-phospho-(1D-myo-inositol-3-phosphate)(in) = a 1,2-diacyl-sn-glycero-3-phospho-(1D-myo-inositol-3-phosphate)(out). Functionally, phospholipid scramblase involved in autophagy and cytoplasm to vacuole transport (Cvt) vesicle formation. Cycles between the preautophagosomal structure/phagophore assembly site (PAS) and the cytoplasmic vesicle pool and supplies membrane for the growing autophagosome. Lipid scramblase activity plays a key role in preautophagosomal structure/phagophore assembly by distributing the phospholipids that arrive through atg2 from the cytoplasmic to the luminal leaflet of the bilayer, thereby driving autophagosomal membrane expansion. Also involved in endoplasmic reticulum-specific autophagic process and is essential for the survival of cells subjected to severe ER stress. Different machineries are required for anterograde trafficking to the PAS during either the Cvt pathway or bulk autophagy and for retrograde trafficking. Has a role in meiosis and sporulation. In Schizosaccharomyces pombe (strain 972 / ATCC 24843) (Fission yeast), this protein is Autophagy-related protein 9.